The primary structure comprises 158 residues: NAD(P)H-quinone oxidoreductase subunit J, chloroplastic (158 aa).

The protein belongs to the complex I 30 kDa subunit family. In terms of assembly, NDH is composed of at least 16 different subunits, 5 of which are encoded in the nucleus.

The protein resides in the plastid. Its subcellular location is the chloroplast thylakoid membrane. It catalyses the reaction a plastoquinone + NADH + (n+1) H(+)(in) = a plastoquinol + NAD(+) + n H(+)(out). The catalysed reaction is a plastoquinone + NADPH + (n+1) H(+)(in) = a plastoquinol + NADP(+) + n H(+)(out). NDH shuttles electrons from NAD(P)H:plastoquinone, via FMN and iron-sulfur (Fe-S) centers, to quinones in the photosynthetic chain and possibly in a chloroplast respiratory chain. The immediate electron acceptor for the enzyme in this species is believed to be plastoquinone. Couples the redox reaction to proton translocation, and thus conserves the redox energy in a proton gradient. This chain is NAD(P)H-quinone oxidoreductase subunit J, chloroplastic, found in Solanum lycopersicum (Tomato).